A 143-amino-acid chain; its full sequence is Small ribosomal subunit protein uS12 (143 aa).

The segment covering 1 to 15 (MGKCRGLRTARKLRD) has biased composition (basic residues). Positions 1–27 (MGKCRGLRTARKLRDHRREQKWHDKQY) are disordered. Basic and acidic residues predominate over residues 16–27 (HRREQKWHDKQY).

The protein belongs to the universal ribosomal protein uS12 family. Component of the 40S small ribosomal subunit.

Its subcellular location is the cytoplasm. The protein localises to the cytosol. The protein resides in the rough endoplasmic reticulum. This chain is Small ribosomal subunit protein uS12 (rps23), found in Ictalurus punctatus (Channel catfish).